A 612-amino-acid chain; its full sequence is Cyclin-dependent kinase 8 (612 aa).

In terms of domain architecture, Protein kinase spans 23–345 (FENSKEIGRG…CEEAMNDIYF (323 aa)). ATP is bound by residues 29 to 37 (IGRGTYGLV) and Lys-57. The Proton acceptor role is filled by Asp-155. Low complexity-rich tracts occupy residues 403–455 (QQQM…MGQP), 472–483 (HQMMQQQHQSQH), 543–555 (PQPG…QQRP), 564–573 (QGYMNPQMGM), and 600–612 (NPQQ…QYHR). Disordered regions lie at residues 403–483 (QQQM…QSQH) and 543–612 (PQPG…QYHR).

Belongs to the protein kinase superfamily. CMGC Ser/Thr protein kinase family. CDC2/CDKX subfamily. In terms of assembly, component of the Mediator complex. It depends on Mg(2+) as a cofactor.

The protein localises to the nucleus. It carries out the reaction L-seryl-[protein] + ATP = O-phospho-L-seryl-[protein] + ADP + H(+). It catalyses the reaction L-threonyl-[protein] + ATP = O-phospho-L-threonyl-[protein] + ADP + H(+). The catalysed reaction is [DNA-directed RNA polymerase] + ATP = phospho-[DNA-directed RNA polymerase] + ADP + H(+). In terms of biological role, component of the Mediator complex, a coactivator involved in regulated gene transcription of nearly all RNA polymerase II-dependent genes. Mediator functions as a bridge to convey information from gene-specific regulatory proteins to the basal RNA polymerase II transcription machinery. Mediator is recruited to promoters by direct interactions with regulatory proteins and serves as a scaffold for the assembly of a functional pre-initiation complex with RNA polymerase II and the general transcription factors. Phosphorylates the CTD (C-terminal domain) of the large subunit of RNA polymerase II (RNAp II), which may inhibit the formation of a transcription initiation complex. The protein is Cyclin-dependent kinase 8 (cdk-8) of Caenorhabditis briggsae.